The chain runs to 262 residues: Nodulation protein J (262 aa).

Residues 33–259 (ASILGNLADP…FLSTALLRRR (227 aa)) enclose the ABC transmembrane type-2 domain. The next 7 helical transmembrane spans lie at 35–55 (ILGN…GLGM), 62–82 (GVSY…MTAS), 102–122 (AILH…AWAA), 127–147 (LAGT…WVSL), 148–168 (LYAL…AMIV), 177–197 (YFIF…GAVF), and 231–251 (LVHV…PFFL).

Belongs to the ABC-2 integral membrane protein family. Lipooligosaccharide exporter (TC 3.A.1.102) subfamily. As to quaternary structure, the complex is composed of two ATP-binding proteins (NodI) and two transmembrane proteins (NodJ).

Its subcellular location is the cell inner membrane. Part of the ABC transporter complex NodIJ involved in the export of the nodulation factors (Nod factors), the bacterial signal molecules that induce symbiosis and subsequent nodulation induction. Nod factors are LCO (lipo-chitin oligosaccharide), a modified beta-1,4-linked N-acetylglucosamine oligosaccharide. This subunit encodes the transporter. The chain is Nodulation protein J (nodJ) from Rhizobium meliloti (strain 1021) (Ensifer meliloti).